Reading from the N-terminus, the 339-residue chain is Ribosomal RNA small subunit methyltransferase H (339 aa).

Residues Gly52 to His54, Asp71, Phe98, Asp130, and Gln137 contribute to the S-adenosyl-L-methionine site.

Belongs to the methyltransferase superfamily. RsmH family.

Its subcellular location is the cytoplasm. It catalyses the reaction cytidine(1402) in 16S rRNA + S-adenosyl-L-methionine = N(4)-methylcytidine(1402) in 16S rRNA + S-adenosyl-L-homocysteine + H(+). Specifically methylates the N4 position of cytidine in position 1402 (C1402) of 16S rRNA. The chain is Ribosomal RNA small subunit methyltransferase H from Corynebacterium diphtheriae (strain ATCC 700971 / NCTC 13129 / Biotype gravis).